We begin with the raw amino-acid sequence, 136 residues long: S-protein homolog 6 (136 aa).

Positions 1–17 are cleaved as a signal peptide; that stretch reads MFIIIFIVLISLIGCET. Residues N76 and N108 are each glycosylated (N-linked (GlcNAc...) asparagine).

Belongs to the plant self-incompatibility (S1) protein family.

It is found in the secreted. In Arabidopsis thaliana (Mouse-ear cress), this protein is S-protein homolog 6.